The following is a 520-amino-acid chain: Cytochrome P450 monooxygenase 98 (520 aa).

A helical membrane pass occupies residues 7–27; sequence MLNNNLLIVIGTFAVCVYIVL. Cysteine 445 is a binding site for heme.

Belongs to the cytochrome P450 family. Requires heme as cofactor.

Its subcellular location is the membrane. It participates in secondary metabolite biosynthesis. Functionally, cytochrome P450 monooxygenase that is able to use pyrene, phenanthrene, 3,5-dimethoxy-trans-stilbene and 3,5,4'-trimethoxy-trans-stilbene as substrates for oxidation. The protein is Cytochrome P450 monooxygenase 98 of Postia placenta (strain ATCC 44394 / Madison 698-R) (Brown rot fungus).